Here is a 136-residue protein sequence, read N- to C-terminus: Large ribosomal subunit protein uL16 (136 aa).

This sequence belongs to the universal ribosomal protein uL16 family. Part of the 50S ribosomal subunit.

Functionally, binds 23S rRNA and is also seen to make contacts with the A and possibly P site tRNAs. This chain is Large ribosomal subunit protein uL16, found in Salmonella agona (strain SL483).